The following is a 157-amino-acid chain: SUMO-conjugating enzyme UBC9 (157 aa).

Ser2 is subject to N-acetylserine. Residues 4–157 (LCLQRLQEER…VLLQAKQYSK (154 aa)) enclose the UBC core domain. Residue Cys93 is the Glycyl thioester intermediate of the active site.

Belongs to the ubiquitin-conjugating enzyme family. Interacts with SIZ1.

The protein localises to the nucleus. It functions in the pathway protein modification; protein sumoylation. In terms of biological role, E2 ubiquitin-like--protein ligase mediating SUMO/Smt3 attachment to septins and PCNA. Seems to be involved in degradation of S- (CLB5) and M-phase cyclins (CLB2). The polypeptide is SUMO-conjugating enzyme UBC9 (UBC9) (Saccharomyces cerevisiae (strain ATCC 204508 / S288c) (Baker's yeast)).